We begin with the raw amino-acid sequence, 73 residues long: UPF0154 protein PEPE_0872 (73 aa).

A helical transmembrane segment spans residues 5-25 (IWIMIVIIALLVGAVGGFFFA).

The protein belongs to the UPF0154 family.

It is found in the cell membrane. In Pediococcus pentosaceus (strain ATCC 25745 / CCUG 21536 / LMG 10740 / 183-1w), this protein is UPF0154 protein PEPE_0872.